Consider the following 239-residue polypeptide: Ribonuclease 3 (239 aa).

The RNase III domain maps to 12-137 (RAKLEALIGH…LIAAIYLDGG (126 aa)). E50 contacts Mg(2+). Residue D54 is part of the active site. Mg(2+)-binding residues include D123 and E126. Residue E126 is part of the active site. The DRBM domain maps to 162-231 (DAKTELQEWS…ATKMLEREGI (70 aa)).

This sequence belongs to the ribonuclease III family. In terms of assembly, homodimer. Mg(2+) serves as cofactor.

The protein localises to the cytoplasm. It carries out the reaction Endonucleolytic cleavage to 5'-phosphomonoester.. Its function is as follows. Digests double-stranded RNA. Involved in the processing of primary rRNA transcript to yield the immediate precursors to the large and small rRNAs (23S and 16S). Processes some mRNAs, and tRNAs when they are encoded in the rRNA operon. Processes pre-crRNA and tracrRNA of type II CRISPR loci if present in the organism. The chain is Ribonuclease 3 from Rhizobium etli (strain ATCC 51251 / DSM 11541 / JCM 21823 / NBRC 15573 / CFN 42).